The following is a 372-amino-acid chain: N-methyl-L-tryptophan oxidase (372 aa).

4-34 (DLIIIGSGSVGAAAGYYATRAGLKVLMTDAH) lines the FAD pocket. Position 307 is an S-8alpha-FAD cysteine (cysteine 307).

This sequence belongs to the MSOX/MTOX family. MTOX subfamily. Monomer. Requires FAD as cofactor.

It catalyses the reaction N(alpha)-methyl-L-tryptophan + O2 + H2O = L-tryptophan + formaldehyde + H2O2. In terms of biological role, catalyzes the oxidative demethylation of N-methyl-L-tryptophan. This Citrobacter koseri (strain ATCC BAA-895 / CDC 4225-83 / SGSC4696) protein is N-methyl-L-tryptophan oxidase.